We begin with the raw amino-acid sequence, 317 residues long: Universal stress protein MT2052 (317 aa).

Residues glycine 13, 128 to 134 (GYRGQGA), 142 to 143 (SV), glycine 175, aspartate 208, 277 to 283 (GSHGRGG), and 291 to 293 (SVS) each bind ATP.

Belongs to the universal stress protein A family.

This Mycobacterium tuberculosis (strain CDC 1551 / Oshkosh) protein is Universal stress protein MT2052.